Consider the following 362-residue polypeptide: Chorismate synthase (362 aa).

Residue Arg-46 coordinates NADP(+). FMN contacts are provided by residues 121-123 (RAS), 237-238 (NA), Gly-277, 292-296 (KPTPS), and Arg-318.

It belongs to the chorismate synthase family. Homotetramer. It depends on FMNH2 as a cofactor.

It catalyses the reaction 5-O-(1-carboxyvinyl)-3-phosphoshikimate = chorismate + phosphate. It functions in the pathway metabolic intermediate biosynthesis; chorismate biosynthesis; chorismate from D-erythrose 4-phosphate and phosphoenolpyruvate: step 7/7. Catalyzes the anti-1,4-elimination of the C-3 phosphate and the C-6 proR hydrogen from 5-enolpyruvylshikimate-3-phosphate (EPSP) to yield chorismate, which is the branch point compound that serves as the starting substrate for the three terminal pathways of aromatic amino acid biosynthesis. This reaction introduces a second double bond into the aromatic ring system. The polypeptide is Chorismate synthase (Campylobacter lari (strain RM2100 / D67 / ATCC BAA-1060)).